The chain runs to 110 residues: Parvalbumin alpha (110 aa).

Ser2 is modified (N-acetylserine). Residues Ser2, Ser8, and Ser24 each carry the phosphoserine modification. EF-hand domains follow at residues 39–74 and 78–110; these read KSAD…FSSD and LSAK…VAES. Residues Asp52, Asp54, Ser56, Phe58, Glu60, and Glu63 each contribute to the Ca(2+) site. Ser66 carries the post-translational modification Phosphoserine. Positions 91, 93, 95, 97, and 102 each coordinate Ca(2+).

In terms of biological role, in muscle, parvalbumin is thought to be involved in relaxation after contraction. It binds two calcium ions. This is Parvalbumin alpha (Pvalb) from Rattus norvegicus (Rat).